Consider the following 2292-residue polypeptide: Protein Ycf2 (2292 aa).

1640–1647 (GSIGIGRS) provides a ligand contact to ATP.

It belongs to the Ycf2 family.

It localises to the plastid. It is found in the chloroplast stroma. Probable ATPase of unknown function. Its presence in a non-photosynthetic plant (Epifagus virginiana) and experiments in tobacco indicate that it has an essential function which is probably not related to photosynthesis. This chain is Protein Ycf2, found in Liriodendron tulipifera (Tuliptree).